The sequence spans 463 residues: Glutamate--tRNA ligase 1 (463 aa).

The short motif at 10 to 20 (PSPTGYLHIGG) is the 'HIGH' region element. The short motif at 238–242 (KLSKR) is the 'KMSKS' region element. Lys241 serves as a coordination point for ATP.

The protein belongs to the class-I aminoacyl-tRNA synthetase family. Glutamate--tRNA ligase type 1 subfamily. As to quaternary structure, monomer.

The protein localises to the cytoplasm. It carries out the reaction tRNA(Glu) + L-glutamate + ATP = L-glutamyl-tRNA(Glu) + AMP + diphosphate. In terms of biological role, catalyzes the attachment of glutamate to tRNA(Glu) in a two-step reaction: glutamate is first activated by ATP to form Glu-AMP and then transferred to the acceptor end of tRNA(Glu). This is Glutamate--tRNA ligase 1 from Helicobacter pylori (strain J99 / ATCC 700824) (Campylobacter pylori J99).